The primary structure comprises 476 residues: Tubulointerstitial nephritis antigen (476 aa).

A glycan (N-linked (GlcNAc...) asparagine) is linked at Asn38. Residues 59–107 form the SMB domain; that stretch reads NFGCCEDRDDGCVTEFYAANALCYCDKFCDRENSDCCPDYKSFCREEKE. Disulfide bonds link Cys63–Cys70, Cys70–Cys102, Cys81–Cys83, Cys81–Cys95, Cys87–Cys94, and Cys95–Cys102. Residues Asn175, Asn314, Asn360, and Asn455 are each glycosylated (N-linked (GlcNAc...) asparagine).

It belongs to the peptidase C1 family. In terms of processing, it has been suggested that the active SMB domain may be permitted considerable disulfide bond heterogeneity or variability, thus 2 alternate disulfide patterns based on 3D structures are described with 1 disulfide bond conserved in both. Expressed in the kidney cortex, small intestine and cornea.

The protein resides in the secreted. Its subcellular location is the extracellular space. The protein localises to the extracellular matrix. It is found in the basement membrane. Functionally, mediates adhesion of proximal tubule epithelial cells via integrins alpha3-beta1 and alphaV-beta3. This is a non catalytic peptidase C1 family protein. The sequence is that of Tubulointerstitial nephritis antigen (TINAG) from Homo sapiens (Human).